Here is a 331-residue protein sequence, read N- to C-terminus: Aromatic 2-oxoacid reductase (331 aa).

Residues 154–155, aspartate 175, 205–206, asparagine 211, 232–234, and aspartate 258 each bind NAD(+); these read RI, AP, and AAR. The active site involves arginine 234. Residue glutamate 263 is part of the active site. Histidine 295 functions as the Proton donor in the catalytic mechanism.

It belongs to the D-isomer specific 2-hydroxyacid dehydrogenase family.

It catalyses the reaction (R)-3-phenyllactate + NAD(+) = 3-phenylpyruvate + NADH + H(+). It carries out the reaction (2R)-2-hydroxy-3-(4-hydroxyphenyl)propanoate + NAD(+) = 3-(4-hydroxyphenyl)pyruvate + NADH + H(+). The catalysed reaction is 3-(indol-3-yl)lactate + NAD(+) = indole-3-pyruvate + NADH + H(+). It functions in the pathway amino-acid degradation. Its function is as follows. Essential for the reductive metabolism of L-phenylalanine, L-tyrosine and L-tryptophan. Catalyzes the conversion of phenylpyruvic acid to phenyllactic acid, 4-hydroxy-phenylpyruvic acid to 4-hydroxy-phenyllactic acid, and indolepyruvic acid to indolelactic acid. The protein is Aromatic 2-oxoacid reductase of Clostridium sporogenes (strain ATCC 7955 / DSM 767 / NBRC 16411 / NCIMB 8053 / NCTC 8594 / PA 3679).